A 154-amino-acid polypeptide reads, in one-letter code: MGLSDGEWQLVLKVWGKVEADIAGHGQEVLIRLFKDHPETLEKFDKFKNLKTEDEMKASEDLKKHGSTVLGALGGILKKKGQHEAEIKPLAQSHATKHKIPVKYLEFISEAIIQVLKSKHSGDFGADAQGAMSKALELFRNDIAAKYKELGFQG.

A Globin domain is found at glycine 2–lysine 148. Serine 4 carries the phosphoserine modification. Histidine 65 serves as a coordination point for nitrite. Residue histidine 65 participates in O2 binding. Threonine 68 carries the post-translational modification Phosphothreonine. Heme b is bound at residue histidine 94.

It belongs to the globin family. Monomeric.

The protein resides in the cytoplasm. It is found in the sarcoplasm. The enzyme catalyses Fe(III)-heme b-[protein] + nitric oxide + H2O = Fe(II)-heme b-[protein] + nitrite + 2 H(+). It carries out the reaction H2O2 + AH2 = A + 2 H2O. Monomeric heme protein which primary function is to store oxygen and facilitate its diffusion within muscle tissues. Reversibly binds oxygen through a pentacoordinated heme iron and enables its timely and efficient release as needed during periods of heightened demand. Depending on the oxidative conditions of tissues and cells, and in addition to its ability to bind oxygen, it also has a nitrite reductase activity whereby it regulates the production of bioactive nitric oxide. Under stress conditions, like hypoxia and anoxia, it also protects cells against reactive oxygen species thanks to its pseudoperoxidase activity. This Sciurus vulgaris (Eurasian red squirrel) protein is Myoglobin (MB).